A 361-amino-acid polypeptide reads, in one-letter code: NAD-dependent protein deacetylase hst2-1 (361 aa).

A Deacetylase sirtuin-type domain is found at 16–276 (SVLEARTVEA…RKLARALGWE (261 aa)). NAD(+) is bound by residues 43 to 63 (GAGI…TGIY) and 126 to 129 (QNID). His-146 acts as the Proton acceptor in catalysis. Residues Cys-154, Cys-157, Cys-178, and Cys-181 each contribute to the Zn(2+) site. NAD(+) is bound by residues 217–219 (GTS), 242–244 (NRE), and Cys-262. Residues 294–328 (EEELATPRTREERLENEISRLTAEIDKTLKISDAY) are a coiled coil. Positions 335 to 361 (RLEGEPLSSPESNGTGLAHVFPHLARR) are disordered.

The protein belongs to the sirtuin family. Class I subfamily. The cofactor is Zn(2+).

The protein localises to the cytoplasm. It is found in the nucleus. It catalyses the reaction N(6)-acetyl-L-lysyl-[protein] + NAD(+) + H2O = 2''-O-acetyl-ADP-D-ribose + nicotinamide + L-lysyl-[protein]. Functionally, NAD-dependent histone deacetylase, which could function in telomeric silencing, cell cycle progression and chromosome stability. This chain is NAD-dependent protein deacetylase hst2-1, found in Emericella nidulans (strain FGSC A4 / ATCC 38163 / CBS 112.46 / NRRL 194 / M139) (Aspergillus nidulans).